Reading from the N-terminus, the 280-residue chain is Bifunctional protein FolD (280 aa).

NADP(+)-binding positions include 158–160 (GES), Ile183, and Ile222.

The protein belongs to the tetrahydrofolate dehydrogenase/cyclohydrolase family. As to quaternary structure, homodimer.

The enzyme catalyses (6R)-5,10-methylene-5,6,7,8-tetrahydrofolate + NADP(+) = (6R)-5,10-methenyltetrahydrofolate + NADPH. It carries out the reaction (6R)-5,10-methenyltetrahydrofolate + H2O = (6R)-10-formyltetrahydrofolate + H(+). Its pathway is one-carbon metabolism; tetrahydrofolate interconversion. Catalyzes the oxidation of 5,10-methylenetetrahydrofolate to 5,10-methenyltetrahydrofolate and then the hydrolysis of 5,10-methenyltetrahydrofolate to 10-formyltetrahydrofolate. This Mycoplasma mobile (strain ATCC 43663 / 163K / NCTC 11711) (Mesomycoplasma mobile) protein is Bifunctional protein FolD.